We begin with the raw amino-acid sequence, 107 residues long: MKYLGAYLLATLGGNASPSAQDVLKVLEAGGLDCDMENANSVVDALKGKTISEVIAQGKVKLSSVPSGGSAPAAAAPSGGAAPKAEEKKKEEPKEESDDDMGFGLFD.

Residues 63–83 (SSVPSGGSAPAAAAPSGGAAP) show a composition bias toward low complexity. Positions 63-107 (SSVPSGGSAPAAAAPSGGAAPKAEEKKKEEPKEESDDDMGFGLFD) are disordered. The span at 84-93 (KAEEKKKEEP) shows a compositional bias: basic and acidic residues.

This sequence belongs to the eukaryotic ribosomal protein P1/P2 family. As to quaternary structure, P1 and P2 exist as dimers at the large ribosomal subunit. Phosphorylated.

Plays an important role in the elongation step of protein synthesis. This chain is Large ribosomal subunit protein P2, found in Caenorhabditis elegans.